We begin with the raw amino-acid sequence, 275 residues long: Formamidopyrimidine-DNA glycosylase (275 aa).

Pro-2 functions as the Schiff-base intermediate with DNA in the catalytic mechanism. Glu-3 (proton donor) is an active-site residue. Lys-58 acts as the Proton donor; for beta-elimination activity in catalysis. DNA is bound by residues His-93, Arg-111, and Arg-156. An FPG-type zinc finger spans residues 241 to 275 (FVYDRAGEPCRVCGTPIRQIVQGQRSTYFCPTCQR). Arg-265 functions as the Proton donor; for delta-elimination activity in the catalytic mechanism.

The protein belongs to the FPG family. Monomer. It depends on Zn(2+) as a cofactor.

The enzyme catalyses Hydrolysis of DNA containing ring-opened 7-methylguanine residues, releasing 2,6-diamino-4-hydroxy-5-(N-methyl)formamidopyrimidine.. It carries out the reaction 2'-deoxyribonucleotide-(2'-deoxyribose 5'-phosphate)-2'-deoxyribonucleotide-DNA = a 3'-end 2'-deoxyribonucleotide-(2,3-dehydro-2,3-deoxyribose 5'-phosphate)-DNA + a 5'-end 5'-phospho-2'-deoxyribonucleoside-DNA + H(+). In terms of biological role, involved in base excision repair of DNA damaged by oxidation or by mutagenic agents. Acts as a DNA glycosylase that recognizes and removes damaged bases. Has a preference for oxidized purines, such as 7,8-dihydro-8-oxoguanine (8-oxoG). Has AP (apurinic/apyrimidinic) lyase activity and introduces nicks in the DNA strand. Cleaves the DNA backbone by beta-delta elimination to generate a single-strand break at the site of the removed base with both 3'- and 5'-phosphates. The chain is Formamidopyrimidine-DNA glycosylase from Burkholderia multivorans (strain ATCC 17616 / 249).